The sequence spans 62 residues: Large ribosomal subunit protein eL24 (62 aa).

Residues Cys-6, Cys-9, Cys-32, and Cys-36 each contribute to the Zn(2+) site. A C4-type zinc finger spans residues 6–36 (CSFCGELLEPGTGLLFAKRDGSTYYFCSSKC).

The protein belongs to the eukaryotic ribosomal protein eL24 family. Part of the 50S ribosomal subunit. Forms a cluster with proteins L3 and L14. Requires Zn(2+) as cofactor.

Binds to the 23S rRNA. This Methanococcoides burtonii (strain DSM 6242 / NBRC 107633 / OCM 468 / ACE-M) protein is Large ribosomal subunit protein eL24.